A 241-amino-acid chain; its full sequence is Small ribosomal subunit protein uS3 (241 aa).

One can recognise a KH type-2 domain in the interval 39–107 (IREVLMKNLK…EVVINIVEVR (69 aa)). Positions 219-241 (MAELDHAGGGGGGERRRRERDAA) are disordered. Over residues 231–241 (GERRRRERDAA) the composition is skewed to basic and acidic residues.

It belongs to the universal ribosomal protein uS3 family. In terms of assembly, part of the 30S ribosomal subunit. Forms a tight complex with proteins S10 and S14.

In terms of biological role, binds the lower part of the 30S subunit head. Binds mRNA in the 70S ribosome, positioning it for translation. In Beijerinckia indica subsp. indica (strain ATCC 9039 / DSM 1715 / NCIMB 8712), this protein is Small ribosomal subunit protein uS3.